We begin with the raw amino-acid sequence, 191 residues long: Probable protein adenylyltransferase HI_0977 (191 aa).

A Fido domain is found at 37-162 (GSTKGLQQIH…NDLEIRFLLQ (126 aa)). Residues 67-68 (KG), 112-114 (GNG), arginine 118, and glutamine 145 each bind ATP.

This sequence belongs to the fic family.

It carries out the reaction L-tyrosyl-[protein] + ATP = O-(5'-adenylyl)-L-tyrosyl-[protein] + diphosphate. It catalyses the reaction L-threonyl-[protein] + ATP = 3-O-(5'-adenylyl)-L-threonyl-[protein] + diphosphate. Its function is as follows. Probable adenylyltransferase that mediates the addition of adenosine 5'-monophosphate (AMP) to specific residues of target proteins. The polypeptide is Probable protein adenylyltransferase HI_0977 (Haemophilus influenzae (strain ATCC 51907 / DSM 11121 / KW20 / Rd)).